A 308-amino-acid polypeptide reads, in one-letter code: Homoserine O-succinyltransferase (308 aa).

Cys-142 acts as the Acyl-thioester intermediate in catalysis. 2 residues coordinate substrate: Lys-163 and Ser-192. The Proton acceptor role is filled by His-235. The active site involves Glu-237. Residue Arg-249 participates in substrate binding.

It belongs to the MetA family.

The protein resides in the cytoplasm. The catalysed reaction is L-homoserine + succinyl-CoA = O-succinyl-L-homoserine + CoA. It functions in the pathway amino-acid biosynthesis; L-methionine biosynthesis via de novo pathway; O-succinyl-L-homoserine from L-homoserine: step 1/1. Its function is as follows. Transfers a succinyl group from succinyl-CoA to L-homoserine, forming succinyl-L-homoserine. This Pseudoalteromonas atlantica (strain T6c / ATCC BAA-1087) protein is Homoserine O-succinyltransferase.